The chain runs to 518 residues: MPTVVVMDVSLSMTRPVSVEGSEEYQRKHLAVHGLTMLFEHMATNYKLEFTALVVFSSLWELMVPFTRDYNTLQEALSNMDDYDKTCLESALLGVCNIVQQEWGAAIPCQVVLVTDGCLGIGRGSLRHSLATHNQRSESNRFPLPFPFPSKLYVMCMANLEELQSTDSLDCLERLIDLNNGEGQIFTIDGPLCLKNVQSMFGKLIDLAYTPFHAVLKCGHLTSDVQVFPRPEPFIIDEEIDPIPKAINTDLEIVGFVDIADISSPPVLSRHLVLPIALNREGDEVGPGITDDTEDENSANQIAGKIPNFCVLLHGSLKVEGMVAVVQLGPEWYGMLYSQADSKKKSNLMMSLFEPGPEPLPWLGKMAQLGPISDAKENPYGDDDNKSPFPLQPKNKRSYAQNVTVWIKPSGLQTDVQKILRNARKLPEKTQTFYKELNRLRKAALAFGFLDLLKGVADMLERECTLLPDTAHPDAAFQLTHAAQQLKVASTGASEYTAYDHNIAPLQTDFPTTSTERM.

In terms of domain architecture, VWFA spans 2 to 204 (PTVVVMDVSL…KNVQSMFGKL (203 aa)). Mg(2+)-binding residues include Ser-10, Ser-12, and Thr-86. The segment at 373–394 (SDAKENPYGDDDNKSPFPLQPK) is disordered. Residues 374 to 386 (DAKENPYGDDDNK) are compositionally biased toward basic and acidic residues.

This sequence belongs to the Integrator subunit 14 family. In terms of assembly, component of the Integrator complex, composed of core subunits INTS1, INTS2, INTS3, INTS4, INTS5, INTS6, INTS7, INTS8, INTS9/RC74, INTS10, INTS11/CPSF3L, INTS12, INTS13, INTS14 and INTS15. The core complex associates with protein phosphatase 2A subunits PPP2CA and PPP2R1A, to form the Integrator-PP2A (INTAC) complex. INTS14 is part of the tail subcomplex, composed of INTS10, INTS13, INTS14 and INTS15.

It localises to the nucleus. Functionally, component of the integrator complex, a multiprotein complex that terminates RNA polymerase II (Pol II) transcription in the promoter-proximal region of genes. The integrator complex provides a quality checkpoint during transcription elongation by driving premature transcription termination of transcripts that are unfavorably configured for transcriptional elongation: the complex terminates transcription by (1) catalyzing dephosphorylation of the C-terminal domain (CTD) of Pol II subunit POLR2A/RPB1 and SUPT5H/SPT5, (2) degrading the exiting nascent RNA transcript via endonuclease activity and (3) promoting the release of Pol II from bound DNA. The integrator complex is also involved in terminating the synthesis of non-coding Pol II transcripts, such as enhancer RNAs (eRNAs), small nuclear RNAs (snRNAs), telomerase RNAs and long non-coding RNAs (lncRNAs). Within the integrator complex, INTS14 is part of the integrator tail module that acts as a platform for the recruitment of transcription factors at promoters. The sequence is that of Integrator complex subunit 14 from Gallus gallus (Chicken).